We begin with the raw amino-acid sequence, 469 residues long: Cytoplasmic tRNA 2-thiolation protein 2 (469 aa).

Belongs to the CTU2/NCS2 family.

Its subcellular location is the cytoplasm. Its pathway is tRNA modification; 5-methoxycarbonylmethyl-2-thiouridine-tRNA biosynthesis. In terms of biological role, plays a central role in 2-thiolation of mcm(5)S(2)U at tRNA wobble positions of tRNA(Lys), tRNA(Glu) and tRNA(Gln). May act by forming a heterodimer with NCS6 that ligates sulfur from thiocarboxylated URM1 onto the uridine of tRNAs at wobble position. Prior mcm(5) tRNA modification by the elongator complex is required for 2-thiolation. May also be involved in protein urmylation. This chain is Cytoplasmic tRNA 2-thiolation protein 2, found in Candida glabrata (strain ATCC 2001 / BCRC 20586 / JCM 3761 / NBRC 0622 / NRRL Y-65 / CBS 138) (Yeast).